The primary structure comprises 219 residues: Small ribosomal subunit protein uS3c (219 aa).

The KH type-2 domain occupies 39–118 (IRSFIRKYIQ…RLNIVITKVE (80 aa)).

Belongs to the universal ribosomal protein uS3 family. In terms of assembly, part of the 30S ribosomal subunit.

It localises to the plastid. This Cuscuta obtusiflora (Peruvian dodder) protein is Small ribosomal subunit protein uS3c (rps3).